The following is a 346-amino-acid chain: MTYALEVDGVDKSFGGATILRGVAFAVESGSTTAIVGPSGCGKTTLLRLIAGFEKPDAGTIALAGRVVAGGGWAPAHRRSVGYVAQDGALFPHATVGANVGFGLPRRARTPARIAELLEMVSLDPSYAARRPDQLSGGQQQRVALARALAREPELMLLDEPFSALDAGLRANTRRIVADVLAKAAITTILVTHDQPEALSFADRVAVMRAGRLAQIGTPREIYSTPIDVPTAEFIGDAVVLSAHVDGSRARCALGDVAVAANGVHGNARVMVRPEQIELTPDGAGVSGTVVDVEYLGSEMLLGIRLNTADGMVPERVTVRRFGATTLTPGDRVGIRVLGKAVAYPA.

An ABC transporter domain is found at 5 to 235 (LEVDGVDKSF…PIDVPTAEFI (231 aa)). 37 to 44 (GPSGCGKT) is an ATP binding site.

It belongs to the ABC transporter superfamily. Fe(3+) ion importer (TC 3.A.1.10) family. The complex is composed of two ATP-binding proteins (FbpC), two transmembrane proteins (FbpB) and a solute-binding protein (FbpA).

It localises to the cell membrane. It catalyses the reaction Fe(3+)(out) + ATP + H2O = Fe(3+)(in) + ADP + phosphate + H(+). In terms of biological role, part of the ABC transporter complex FbpABC involved in Fe(3+) ions import. Responsible for energy coupling to the transport system. The polypeptide is Fe(3+) ions import ATP-binding protein FbpC 1 (Rhodococcus jostii (strain RHA1)).